Consider the following 435-residue polypeptide: Histidinol dehydrogenase (435 aa).

3 residues coordinate NAD(+): Tyr-131, Gln-189, and Asn-212. Ser-238, Gln-260, and His-263 together coordinate substrate. The Zn(2+) site is built by Gln-260 and His-263. Residues Glu-327 and His-328 each act as proton acceptor in the active site. His-328, Asp-361, Glu-415, and His-420 together coordinate substrate. Asp-361 contributes to the Zn(2+) binding site. His-420 is a binding site for Zn(2+).

This sequence belongs to the histidinol dehydrogenase family. Homodimer. Zn(2+) is required as a cofactor.

The enzyme catalyses L-histidinol + 2 NAD(+) + H2O = L-histidine + 2 NADH + 3 H(+). It functions in the pathway amino-acid biosynthesis; L-histidine biosynthesis; L-histidine from 5-phospho-alpha-D-ribose 1-diphosphate: step 9/9. Its function is as follows. Catalyzes the sequential NAD-dependent oxidations of L-histidinol to L-histidinaldehyde and then to L-histidine. The polypeptide is Histidinol dehydrogenase (Buchnera aphidicola subsp. Baizongia pistaciae (strain Bp)).